Consider the following 541-residue polypeptide: ATP synthase subunit alpha (541 aa).

169 to 176 (GDRQTGKT) lines the ATP pocket. The tract at residues 506–541 (NTLLNVEEGDTGEEENNEGHNKAEQDTEEKDTEEVV) is disordered. Composition is skewed to acidic residues over residues 512–521 (EEGDTGEEEN) and 531–541 (DTEEKDTEEVV).

It belongs to the ATPase alpha/beta chains family. In terms of assembly, F-type ATPases have 2 components, CF(1) - the catalytic core - and CF(0) - the membrane proton channel. CF(1) has five subunits: alpha(3), beta(3), gamma(1), delta(1), epsilon(1). CF(0) has three main subunits: a(1), b(2) and c(9-12). The alpha and beta chains form an alternating ring which encloses part of the gamma chain. CF(1) is attached to CF(0) by a central stalk formed by the gamma and epsilon chains, while a peripheral stalk is formed by the delta and b chains.

Its subcellular location is the cell inner membrane. The enzyme catalyses ATP + H2O + 4 H(+)(in) = ADP + phosphate + 5 H(+)(out). Its function is as follows. Produces ATP from ADP in the presence of a proton gradient across the membrane. The alpha chain is a regulatory subunit. The chain is ATP synthase subunit alpha from Halothermothrix orenii (strain H 168 / OCM 544 / DSM 9562).